The chain runs to 525 residues: tRNA-2-methylthio-N(6)-dimethylallyladenosine synthase (525 aa).

Residues 14 to 130 (RTYQVRTYGC…LPTLLERARH (117 aa)) form the MTTase N-terminal domain. [4Fe-4S] cluster contacts are provided by Cys23, Cys59, Cys93, Cys167, Cys171, and Cys174. Positions 153 to 400 (RESAYAGWVS…IELQERISLE (248 aa)) constitute a Radical SAM core domain. The region spanning 403 to 482 (QAQVGRTLEL…PHHLIADGAL (80 aa)) is the TRAM domain.

It belongs to the methylthiotransferase family. MiaB subfamily. Monomer. [4Fe-4S] cluster serves as cofactor.

The protein resides in the cytoplasm. The enzyme catalyses N(6)-dimethylallyladenosine(37) in tRNA + (sulfur carrier)-SH + AH2 + 2 S-adenosyl-L-methionine = 2-methylsulfanyl-N(6)-dimethylallyladenosine(37) in tRNA + (sulfur carrier)-H + 5'-deoxyadenosine + L-methionine + A + S-adenosyl-L-homocysteine + 2 H(+). In terms of biological role, catalyzes the methylthiolation of N6-(dimethylallyl)adenosine (i(6)A), leading to the formation of 2-methylthio-N6-(dimethylallyl)adenosine (ms(2)i(6)A) at position 37 in tRNAs that read codons beginning with uridine. This chain is tRNA-2-methylthio-N(6)-dimethylallyladenosine synthase, found in Mycobacterium sp. (strain MCS).